The following is an 842-amino-acid chain: Leucine--tRNA ligase (842 aa).

Positions 44-55 (PYPSANGLHVGH) match the 'HIGH' region motif. Residues 619–623 (KMSKS) carry the 'KMSKS' region motif. Lys622 contacts ATP.

It belongs to the class-I aminoacyl-tRNA synthetase family.

The protein localises to the cytoplasm. The catalysed reaction is tRNA(Leu) + L-leucine + ATP = L-leucyl-tRNA(Leu) + AMP + diphosphate. The sequence is that of Leucine--tRNA ligase from Borrelia duttonii (strain Ly).